Reading from the N-terminus, the 430-residue chain is Glutamate-1-semialdehyde 2,1-aminomutase (430 aa).

K265 is modified (N6-(pyridoxal phosphate)lysine).

Belongs to the class-III pyridoxal-phosphate-dependent aminotransferase family. HemL subfamily. Homodimer. Pyridoxal 5'-phosphate is required as a cofactor.

The protein localises to the cytoplasm. The enzyme catalyses (S)-4-amino-5-oxopentanoate = 5-aminolevulinate. It functions in the pathway porphyrin-containing compound metabolism; protoporphyrin-IX biosynthesis; 5-aminolevulinate from L-glutamyl-tRNA(Glu): step 2/2. The polypeptide is Glutamate-1-semialdehyde 2,1-aminomutase (Shewanella baltica (strain OS155 / ATCC BAA-1091)).